The chain runs to 528 residues: DNA primase large subunit (528 aa).

The tract at residues Asn210–Arg239 is H-T-H-like motif. The [4Fe-4S] cluster site is built by Cys336, Cys417, Cys434, and Cys474.

It belongs to the eukaryotic-type primase large subunit family. As to quaternary structure, DNA polymerase alpha:primase is a four subunit enzyme complex, which is assembled throughout the cell cycle, and consists of the two DNA polymerase subunits A POL1 and B POL12, and the DNA primase large PRI2 and small PRI1 subunits. Interacts with MCM10. [4Fe-4S] cluster serves as cofactor.

In terms of biological role, DNA primase is the polymerase that synthesizes small RNA primers for the Okazaki fragments made during discontinuous DNA replication. In a complex with DNA polymerase alpha (DNA polymerase alpha:primase) constitutes a replicative polymerase. Both primase components participate in formation of the active center, but the ATP-binding site is exclusively located on p48. This is DNA primase large subunit (PRI2) from Saccharomyces cerevisiae (strain ATCC 204508 / S288c) (Baker's yeast).